Consider the following 605-residue polypeptide: Elongation factor 4 (605 aa).

The tr-type G domain occupies 11 to 193 (EKIRNFSIIA…QIVEKVPAPT (183 aa)). Residues 23-28 (DHGKST) and 140-143 (NKID) contribute to the GTP site.

This sequence belongs to the TRAFAC class translation factor GTPase superfamily. Classic translation factor GTPase family. LepA subfamily.

It localises to the cell membrane. It catalyses the reaction GTP + H2O = GDP + phosphate + H(+). Functionally, required for accurate and efficient protein synthesis under certain stress conditions. May act as a fidelity factor of the translation reaction, by catalyzing a one-codon backward translocation of tRNAs on improperly translocated ribosomes. Back-translocation proceeds from a post-translocation (POST) complex to a pre-translocation (PRE) complex, thus giving elongation factor G a second chance to translocate the tRNAs correctly. Binds to ribosomes in a GTP-dependent manner. This chain is Elongation factor 4, found in Streptococcus pyogenes serotype M4 (strain MGAS10750).